The chain runs to 273 residues: 2,3,4,5-tetrahydropyridine-2,6-dicarboxylate N-succinyltransferase (273 aa).

It belongs to the transferase hexapeptide repeat family.

The protein resides in the cytoplasm. The catalysed reaction is (S)-2,3,4,5-tetrahydrodipicolinate + succinyl-CoA + H2O = (S)-2-succinylamino-6-oxoheptanedioate + CoA. It participates in amino-acid biosynthesis; L-lysine biosynthesis via DAP pathway; LL-2,6-diaminopimelate from (S)-tetrahydrodipicolinate (succinylase route): step 1/3. The sequence is that of 2,3,4,5-tetrahydropyridine-2,6-dicarboxylate N-succinyltransferase from Acinetobacter baumannii (strain SDF).